Consider the following 240-residue polypeptide: 14-3-3 protein 3 (240 aa).

The protein belongs to the 14-3-3 family. In terms of assembly, interacts with coactosin. Interacts with ACTO/actophorin.

The protein localises to the cytoplasm. The protein resides in the cell projection. It localises to the phagocytic cup. Its function is as follows. Adapter protein which is required for phagocytosis and motility, probably by regulating actin cytoskeleton dynamics. During phagocytosis, plays a role in the initiation and/or formation of the phagocytic cup and is involved in the recruitment of the actin binding protein coactosin to the phagocytic cup. The chain is 14-3-3 protein 3 from Entamoeba histolytica (strain ATCC 30459 / HM-1:IMSS / ABRM).